The primary structure comprises 959 residues: Isoleucine--tRNA ligase (959 aa).

The short motif at 60–70 (PYANGSLHMGH) is the 'HIGH' region element. Glutamate 569 contacts L-isoleucyl-5'-AMP. The 'KMSKS' region signature appears at 610 to 614 (KMSKS). An ATP-binding site is contributed by lysine 613. Residues cysteine 928, cysteine 931, cysteine 948, and cysteine 951 each coordinate Zn(2+).

The protein belongs to the class-I aminoacyl-tRNA synthetase family. IleS type 1 subfamily. In terms of assembly, monomer. Zn(2+) is required as a cofactor.

It localises to the cytoplasm. It catalyses the reaction tRNA(Ile) + L-isoleucine + ATP = L-isoleucyl-tRNA(Ile) + AMP + diphosphate. Its function is as follows. Catalyzes the attachment of isoleucine to tRNA(Ile). As IleRS can inadvertently accommodate and process structurally similar amino acids such as valine, to avoid such errors it has two additional distinct tRNA(Ile)-dependent editing activities. One activity is designated as 'pretransfer' editing and involves the hydrolysis of activated Val-AMP. The other activity is designated 'posttransfer' editing and involves deacylation of mischarged Val-tRNA(Ile). The sequence is that of Isoleucine--tRNA ligase from Rippkaea orientalis (strain PCC 8801 / RF-1) (Cyanothece sp. (strain PCC 8801)).